Consider the following 217-residue polypeptide: 3,4-dihydroxy-2-butanone 4-phosphate synthase (217 aa).

D-ribulose 5-phosphate is bound by residues 37 to 38 (RE), Asp-42, 150 to 154 (RGGHT), and Glu-174. Glu-38 is a Mg(2+) binding site. Residue His-153 participates in Mg(2+) binding.

Belongs to the DHBP synthase family. In terms of assembly, homodimer. Mg(2+) is required as a cofactor. The cofactor is Mn(2+).

It carries out the reaction D-ribulose 5-phosphate = (2S)-2-hydroxy-3-oxobutyl phosphate + formate + H(+). Its pathway is cofactor biosynthesis; riboflavin biosynthesis; 2-hydroxy-3-oxobutyl phosphate from D-ribulose 5-phosphate: step 1/1. Catalyzes the conversion of D-ribulose 5-phosphate to formate and 3,4-dihydroxy-2-butanone 4-phosphate. In Shigella boydii serotype 18 (strain CDC 3083-94 / BS512), this protein is 3,4-dihydroxy-2-butanone 4-phosphate synthase.